Consider the following 44-residue polypeptide: Thaumatin-like protein 5 (44 aa).

The protein belongs to the thaumatin family.

This Glebionis coronaria (Crown daisy) protein is Thaumatin-like protein 5.